A 167-amino-acid polypeptide reads, in one-letter code: SFIGATTLMIAHGLTSSLLFCLANTNYERVHSRTMALARGLQTLLPLAATWWLLASLTNLALPPTINLIGELSVMMAAFSWSHLTIILVGLNTLITALYSLYMLIMTQRGKYTYHINNIMPPFTRENTLMIMHLFPLILLSTNPKLIMGTMYCKYSLNKTLDCESNN.

3 helical membrane passes run 2-22 (FIGA…LFCL), 44-64 (LLPL…ALPP), and 86-106 (IILV…MLIM).

The protein belongs to the complex I subunit 4 family.

The protein localises to the mitochondrion membrane. It carries out the reaction a ubiquinone + NADH + 5 H(+)(in) = a ubiquinol + NAD(+) + 4 H(+)(out). Core subunit of the mitochondrial membrane respiratory chain NADH dehydrogenase (Complex I) that is believed to belong to the minimal assembly required for catalysis. Complex I functions in the transfer of electrons from NADH to the respiratory chain. The immediate electron acceptor for the enzyme is believed to be ubiquinone. The chain is NADH-ubiquinone oxidoreductase chain 4 (MT-ND4) from Carlito syrichta (Philippine tarsier).